The chain runs to 426 residues: Deoxyguanosinetriphosphate triphosphohydrolase-like protein (426 aa).

The interval 1–23 (MYPYSESDAQRLHQEAPKASQLA) is disordered. Positions 67 to 217 (RLTHSLEVAQ…MDFSDDIAYS (151 aa)) constitute an HD domain.

The protein belongs to the dGTPase family. Type 2 subfamily.

This Corynebacterium efficiens (strain DSM 44549 / YS-314 / AJ 12310 / JCM 11189 / NBRC 100395) protein is Deoxyguanosinetriphosphate triphosphohydrolase-like protein.